Consider the following 134-residue polypeptide: Fluoride-specific ion channel FluC 2 (134 aa).

4 helical membrane-spanning segments follow: residues 10 to 30 (LSAE…GALL), 43 to 63 (LLVN…PAAP), 67 to 87 (LLVG…MVDA), and 100 to 120 (FGLI…GFWL). Na(+) contacts are provided by Gly-75 and Thr-78.

It belongs to the fluoride channel Fluc/FEX (TC 1.A.43) family.

It is found in the cell inner membrane. The enzyme catalyses fluoride(in) = fluoride(out). Its activity is regulated as follows. Na(+) is not transported, but it plays an essential structural role and its presence is essential for fluoride channel function. Its function is as follows. Fluoride-specific ion channel. Important for reducing fluoride concentration in the cell, thus reducing its toxicity. The sequence is that of Fluoride-specific ion channel FluC 2 from Synechococcus sp. (strain CC9902).